Here is a 216-residue protein sequence, read N- to C-terminus: UPF0502 protein VCM66_A0698 (216 aa).

The protein belongs to the UPF0502 family.

The protein is UPF0502 protein VCM66_A0698 of Vibrio cholerae serotype O1 (strain M66-2).